We begin with the raw amino-acid sequence, 211 residues long: Thymidylate kinase (211 aa).

10–17 is an ATP binding site; that stretch reads GLDGSGKT.

It belongs to the thymidylate kinase family.

The catalysed reaction is dTMP + ATP = dTDP + ADP. In terms of biological role, phosphorylation of dTMP to form dTDP in both de novo and salvage pathways of dTTP synthesis. The protein is Thymidylate kinase of Blochmanniella floridana.